The primary structure comprises 137 residues: MSAHLQWMVVRNCSSFLIKRNKQTYSTEPNNLKARNSFRYNGLIHRKTVGVEPAADGKGVVVVIKRRSGQRKPATSYVRTTINKNARATLSSIRHMIRKNKYRPDLRMAAIRRASAILRSQKPVMVKRKRTRPTKSS.

S2 carries the N-acetylserine modification. Residues K58 and K65 each participate in a glycyl lysine isopeptide (Lys-Gly) (interchain with G-Cter in SUMO2) cross-link. S115 is subject to Phosphoserine.

This sequence belongs to the eukaryotic ribosomal protein eL28 family. In terms of assembly, component of the large ribosomal subunit.

Its subcellular location is the cytoplasm. In terms of biological role, component of the large ribosomal subunit. The ribosome is a large ribonucleoprotein complex responsible for the synthesis of proteins in the cell. The protein is Large ribosomal subunit protein eL28 (RPL28) of Homo sapiens (Human).